The chain runs to 758 residues: 52 kDa repressor of the inhibitor of the protein kinase (758 aa).

A THAP-type zinc finger spans residues 1-86 (MPNFCAAPNC…LRDNAIPTIF (86 aa)). The tract at residues 116–141 (QKKIEETSEQEQETNTNAQNPSAEAV) is disordered. The residue at position 563 (Ser563) is a Phosphoserine.

In terms of assembly, interacts with DNAJC3, probably sequestring it.

Upstream regulator of interferon-induced serine/threonine protein kinase R (PKR). May block the PKR-inhibitory function of DNAJC3, resulting in restoration of kinase activity and suppression of cell growth. This Mus musculus (Mouse) protein is 52 kDa repressor of the inhibitor of the protein kinase.